Consider the following 1183-residue polypeptide: Chromosome partition protein Smc (1183 aa).

Pro32–Asn39 lines the ATP pocket. The stretch at Glu162–Glu483 forms a coiled coil. The region spanning Ser519–Ile632 is the SMC hinge domain. Positions Ile666–Glu1019 form a coiled coil.

The protein belongs to the SMC family. Homodimer.

The protein localises to the cytoplasm. In terms of biological role, required for chromosome condensation and partitioning. This Fusobacterium nucleatum subsp. nucleatum (strain ATCC 25586 / DSM 15643 / BCRC 10681 / CIP 101130 / JCM 8532 / KCTC 2640 / LMG 13131 / VPI 4355) protein is Chromosome partition protein Smc.